Reading from the N-terminus, the 477-residue chain is Mitochondrial adenyl nucleotide antiporter SLC25A24 (477 aa).

Residues 1-173 are regulatory N-terminal domain; sequence MLRWLRDFVL…RFWKHSTGID (173 aa). Residues 1–197 are Mitochondrial intermembrane-facing; the sequence is MLRWLRDFVL…EKKSGQWWRQ (197 aa). EF-hand domains are found at residues 19–54, 55–88, 86–121, and 122–157; these read EQPTRYETLFQALDRNGDGVVDIGELQEGLRNLGIP, LGQDAEEKIFTTGDVNKDGKLDFEEFMKYLKDHE, DHEKKMKLAFKSLDKNNDGKIEASEIVQSLQTLGLT, and ISEQQAELILQSIDVDGTMTVDWNEWRDYFLFNPVT. Ca(2+) contacts are provided by D32, N34, D36, V38, E43, D68, N70, D72, K74, E79, D99, N101, D103, K105, E110, D135, D137, T139, T141, and E146. The linker region stretch occupies residues 159 to 168; the sequence is IEEIIRFWKH. A C-terminal transmembrane transporter domain region spans residues 174–477; sequence IGDSLTIPDE…MKQTLGVTQK (304 aa). Solcar repeat units lie at residues 192–278, 286–371, and 383–471; these read GQWW…YKKL, IGTF…LKSY, and PGVM…MKQT. Residues 198–215 form a helical membrane-spanning segment; sequence LLAGGIAGAVSRTSTAPL. The Mitochondrial matrix segment spans residues 216–252; that stretch reads DRLKIMMQVHGSKSDKMNIFGGFRQMVKEGGIRSLWR. A helical transmembrane segment spans residues 253-272; that stretch reads GNGTNVIKIAPETAVKFWAY. Topologically, residues 273 to 295 are mitochondrial intermembrane; sequence EQYKKLLTEEGQKIGTFERFISG. A helical transmembrane segment spans residues 296–309; the sequence is SMAGATAQTFIYPM. The Mitochondrial matrix portion of the chain corresponds to 310–345; the sequence is EVMKTRLAVGKTGQYSGIYDCAKKILKHEGLGAFYK. Position 320 is an N6-acetyllysine; alternate (K320). Position 320 is an N6-succinyllysine; alternate (K320). N6-acetyllysine is present on K336. Residues 346-365 traverse the membrane as a helical segment; it reads GYVPNLLGIIPYAGIDLAVY. Topologically, residues 366–388 are mitochondrial intermembrane; it reads ELLKSYWLDNFAKDSVNPGVMVL. Residues 389–406 form a helical membrane-spanning segment; the sequence is LGCGALSSTCGQLASYPL. At 407–445 the chain is on the mitochondrial matrix side; it reads ALVRTRMQAQAMLEGSPQLNMVGLFRRIISKEGIPGLYR. Position 437 is an N6-acetyllysine; alternate (K437). K437 is subject to N6-succinyllysine; alternate. The chain crosses the membrane as a helical span at residues 446 to 465; sequence GITPNFMKVLPAVGISYVVY. Residues 466–477 are Mitochondrial intermembrane-facing; it reads ENMKQTLGVTQK.

Belongs to the mitochondrial carrier (TC 2.A.29) family. In terms of assembly, monomer. In terms of tissue distribution, expressed in all tissues tested. Highly expressed in testis, expressed at intermediate level in small intestine and pancreas, and weakly expressed in kidney, spleen, liver, skeletal muscle and heart.

The protein localises to the mitochondrion inner membrane. The catalysed reaction is Mg(2+)(out) + phosphate(in) + ATP(out) = Mg(2+)(in) + phosphate(out) + ATP(in). It catalyses the reaction ADP(out) + phosphate(in) + H(+)(out) = ADP(in) + phosphate(out) + H(+)(in). It carries out the reaction AMP(out) + phosphate(in) = AMP(in) + phosphate(out). The enzyme catalyses phosphate(in) + ATP(out) + 2 H(+)(out) = phosphate(out) + ATP(in) + 2 H(+)(in). The catalysed reaction is dADP(in) + ADP(out) = dADP(out) + ADP(in). It catalyses the reaction Mg(2+)(in) + ADP(out) + ATP(in) + H(+)(out) = Mg(2+)(out) + ADP(in) + ATP(out) + H(+)(in). It carries out the reaction ADP(out) + diphosphate(in) = ADP(in) + diphosphate(out). The enzyme catalyses dAMP(in) + ADP(out) + H(+)(out) = dAMP(out) + ADP(in) + H(+)(in). The catalysed reaction is 3'-AMP(in) + ADP(out) + H(+)(out) = 3'-AMP(out) + ADP(in) + H(+)(in). It catalyses the reaction dAMP(out) + phosphate(in) = dAMP(in) + phosphate(out). It carries out the reaction 3'-AMP(out) + phosphate(in) = 3'-AMP(in) + phosphate(out). The enzyme catalyses dADP(out) + phosphate(in) + H(+)(out) = dADP(in) + phosphate(out) + H(+)(in). With respect to regulation, activated by an increase in cytosolic calcium levels that induce a conformational change of the N-terminal regulatory domain, uncapping the channel and allowing transport. Inhibited by bathophenanthroline, mersalyl, p-hydroxymercuribenzoate, bromcresol purple and tannic acid. Its function is as follows. Electroneutral antiporter that mediates the transport of adenyl nucleotides through the inner mitochondrial membrane. Originally identified as an ATP-magnesium/inorganic phosphate antiporter, it also acts as a broad specificity adenyl nucleotide antiporter. By regulating the mitochondrial matrix adenyl nucleotide pool could adapt to changing cellular energetic demands and indirectly regulate adenyl nucleotide-dependent metabolic pathways. In vitro, a low activity is also observed with guanyl and pyrimidine nucleotides. May play a role in protecting cells against oxidative stress-induced cell death, by buffering calcium levels in the mitochondrial matrix through the formation of calcium-phosphate precipitates. The sequence is that of Mitochondrial adenyl nucleotide antiporter SLC25A24 from Homo sapiens (Human).